We begin with the raw amino-acid sequence, 158 residues long: Acetolactate synthase small subunit (158 aa).

One can recognise an ACT domain in the interval 4–78; it reads ILSVLLENES…DVLRVIKVGQ (75 aa).

It belongs to the acetolactate synthase small subunit family. Dimer of large and small chains.

The catalysed reaction is 2 pyruvate + H(+) = (2S)-2-acetolactate + CO2. Its pathway is amino-acid biosynthesis; L-isoleucine biosynthesis; L-isoleucine from 2-oxobutanoate: step 1/4. It participates in amino-acid biosynthesis; L-valine biosynthesis; L-valine from pyruvate: step 1/4. This is Acetolactate synthase small subunit (ilvH) from Buchnera aphidicola subsp. Schizaphis graminum (strain Sg).